Here is a 292-residue protein sequence, read N- to C-terminus: Chondroitin proteoglycan 3 (292 aa).

Positions 1–17 are cleaved as a signal peptide; the sequence is MRFVFIIALLLIGASLA. The tract at residues 28–103 is disordered; that stretch reads DVSASEDEFS…EGSGDTSPVV (76 aa). Low complexity predominate over residues 38 to 80; sequence GDSSGEISGESSGEASGEASGEASGEASGEASGESSGETSGES. Acidic residues predominate over residues 81–96; the sequence is SGDEETSGEGSGEEGS. N-linked (GlcNAc...) asparagine glycans are attached at residues N174 and N254.

This Caenorhabditis elegans protein is Chondroitin proteoglycan 3.